The following is a 313-amino-acid chain: Pyrimidine-specific ribonucleoside hydrolase RihB (313 aa).

Residue D11 is the Proton acceptor of the active site. 3 residues coordinate Ca(2+): D11, D16, and V124. Substrate is bound by residues Q227 and H239. A Ca(2+)-binding site is contributed by D240.

The protein belongs to the IUNH family. RihB subfamily. As to quaternary structure, homotetramer. Requires Ca(2+) as cofactor.

It carries out the reaction a pyrimidine ribonucleoside + H2O = a pyrimidine nucleobase + D-ribose. Hydrolyzes cytidine or uridine to ribose and cytosine or uracil, respectively. Has a clear preference for cytidine over uridine. Strictly specific for ribonucleosides. The protein is Pyrimidine-specific ribonucleoside hydrolase RihB of Escherichia coli (strain SMS-3-5 / SECEC).